A 218-amino-acid polypeptide reads, in one-letter code: Small ribosomal subunit protein uS3c (218 aa).

The KH type-2 domain maps to 47–118 (VQKNMRISSG…RLNIAITRVA (72 aa)).

This sequence belongs to the universal ribosomal protein uS3 family. As to quaternary structure, part of the 30S ribosomal subunit.

It localises to the plastid. The protein localises to the chloroplast. The protein is Small ribosomal subunit protein uS3c (rps3) of Calycanthus floridus var. glaucus (Eastern sweetshrub).